An 801-amino-acid chain; its full sequence is Cadherin-20 (801 aa).

A signal peptide spans 1-34; that stretch reads MWTTGRMSNAKSWLGLGTSLYFWALMDLTATVLS. Positions 35 to 59 are excised as a propeptide; sequence STPMPEVELETLFSGRSQSHQRSKR. Residues 60 to 619 lie on the Extracellular side of the membrane; that stretch reads SWVWNQFFVL…AYLLPVSLSR (560 aa). 5 Cadherin domains span residues 61–165, 166–274, 275–389, 390–494, and 494–610; these read WVWN…EPKF, LDGP…PPRF, PQKH…PPVF, EPGF…APEF, and FPRF…SPEA. N-linked (GlcNAc...) asparagine glycosylation occurs at asparagine 261. Asparagine 420, asparagine 461, and asparagine 542 each carry an N-linked (GlcNAc...) asparagine glycan. A helical membrane pass occupies residues 620–640; that stretch reads GALIAILACIFVLLVLVLLIL. Residues 641-801 lie on the Cytoplasmic side of the membrane; that stretch reads SMRRHRKQPY…GASEGPAPLW (161 aa).

In terms of tissue distribution, expressed in brain. Highest level of expression in the retina. In embryo it is synthesized by the forebrain, anterior neural ridge, developing visual system, primitive external granular layer of the cerebellum and a subset of neural crest cells likely to develop into melanoblasts.

It is found in the cell membrane. Cadherins are calcium-dependent cell adhesion proteins. They preferentially interact with themselves in a homophilic manner in connecting cells; cadherins may thus contribute to the sorting of heterogeneous cell types. In Mus musculus (Mouse), this protein is Cadherin-20 (Cdh20).